Reading from the N-terminus, the 120-residue chain is MMSQTELLRKKSHPVDQALTPEEIQQYLTVLDGWSLQGLHIAKSFEFKNYYQTIAFVNAIAFIVHTEDHHPELEVGYNRCVVKFYTHSVNEGLGGISENDFICAAKIDALAGNQFAPMSH.

This sequence belongs to the pterin-4-alpha-carbinolamine dehydratase family.

The enzyme catalyses (4aS,6R)-4a-hydroxy-L-erythro-5,6,7,8-tetrahydrobiopterin = (6R)-L-erythro-6,7-dihydrobiopterin + H2O. This chain is Putative pterin-4-alpha-carbinolamine dehydratase, found in Bdellovibrio bacteriovorus (strain ATCC 15356 / DSM 50701 / NCIMB 9529 / HD100).